Consider the following 358-residue polypeptide: Protein ocs (358 aa).

It belongs to the lysopine/nopaline/octopine/opine/vitopine dehydrogenases family.

It catalyses the reaction D-octopine + NAD(+) + H2O = L-arginine + pyruvate + NADH + H(+). It carries out the reaction D-lysopine + NADP(+) + H2O = L-lysine + pyruvate + NADPH + H(+). Functionally, reductive condensation of pyruvate and arginine, lysine, histidine, or octopine to form octopine, lysopine, histopine, or octopinic acid, respectively. NADPH is the preferred cofactor, but NADH can also be used. The sequence is that of Protein ocs (ocs) from Agrobacterium vitis (Rhizobium vitis).